The following is a 518-amino-acid chain: U3 small nucleolar RNA-associated protein 15 homolog (518 aa).

Residue Ala2 is modified to N-acetylalanine. WD repeat units lie at residues 36–75 (KEFGAVSKVDFSPQPPYNYAVTASSRIHIYGRYSQEPIKT), 78–117 (RFKDTAYCATFRQDGRLLVAGSEDGGVQLFDISGRAPLRQ), 120–159 (GHTKAVHTVDFTADKYHVVSGADDYTVKLWDIPNSKEILT), 162–202 (EHSD…SVLS), 204–242 (EHGQPVESVLLFPSGGLLVSAGGRYVKVWDMLKGGQLLV), 246–285 (NHHKTVTCLCLSSSGQRLLSGSLDRKVKVYSTTSYKVVHS), and 287–326 (DYAASILSLALAHEDETIVVGMTNGILSVKHRKSEAKKES). Lys249 is covalently cross-linked (Glycyl lysine isopeptide (Lys-Gly) (interchain with G-Cter in SUMO2)).

As to quaternary structure, part of the small subunit (SSU) processome, composed of more than 70 proteins and the RNA chaperone small nucleolar RNA (snoRNA) U3. May be a component of the proposed t-UTP subcomplex of the ribosomal small subunit (SSU) processome containing at least UTP4, WDR43, HEATR1, UTP15, WDR75. Interacts directly with UTP4 and WDR43.

Its subcellular location is the nucleus. It localises to the nucleolus. Ribosome biogenesis factor. Involved in nucleolar processing of pre-18S ribosomal RNA. Required for optimal pre-ribosomal RNA transcription by RNA polymerase I. Part of the small subunit (SSU) processome, first precursor of the small eukaryotic ribosomal subunit. During the assembly of the SSU processome in the nucleolus, many ribosome biogenesis factors, an RNA chaperone and ribosomal proteins associate with the nascent pre-rRNA and work in concert to generate RNA folding, modifications, rearrangements and cleavage as well as targeted degradation of pre-ribosomal RNA by the RNA exosome. The chain is U3 small nucleolar RNA-associated protein 15 homolog from Homo sapiens (Human).